Reading from the N-terminus, the 326-residue chain is Transcription initiation factor IIB (326 aa).

The TFIIB-type zinc-finger motif lies at 26-57 (DVEVCPECGSPRLIRDYRRGEFICQDCGLVIE). Residues Cys-30, Cys-33, Cys-49, and Cys-52 each contribute to the Zn(2+) site. 2 consecutive repeat copies span residues 143-226 (SELD…TREL) and 237-318 (DYIP…ELAE).

It belongs to the TFIIB family.

Its function is as follows. Stabilizes TBP binding to an archaeal box-A promoter. Also responsible for recruiting RNA polymerase II to the pre-initiation complex (DNA-TBP-TFIIB). The polypeptide is Transcription initiation factor IIB (Archaeoglobus fulgidus (strain ATCC 49558 / DSM 4304 / JCM 9628 / NBRC 100126 / VC-16)).